Consider the following 961-residue polypeptide: MLQTTLLALQGLSCMNCAQRVKAALESREDVHHAEVNVHYAKVTGEADTHALIETIKQTGYQATEAQTPDVELHLSGLSCGHCTETVRKALEAVSGVISADVTLESANVYGKADIQTLIAAVEQAGYHATQQGIDSPKTEPLTHSAQSQPESLAAAPNTVPATNVALATSTVSDTNTVLPTNTALPTNTTSTTSTADTASATSTAPVINPLPVTESVAQPAASEGESVQLLLTGMSCASCVSKVQNALQRVDGVQVARVNLAERSALVTGTQNNEALIAAVKNAGYGAEIIEDEGERRERQQQMSQASMKRFQWQAALGLLLGIPLMAWGLFGGSMTLTPETQTPWLIIGIITLLVMIFAGGHFYRNAWVSLKNGRATMDTLVALGTGAAWIYSITVNIWPDVFPMEARHLYYEASAMIIGLINLGHAMEQRARQRSSNALERLLDLAPPTAKLVTDDGEKVIPLADVQLGMILRLTTGDRVPVDGEIVQGEVWMDEAMLTGEPIPQQKSVGDIVHAGTQVQDGTVQFRASAIGSQTTLARIIKLVRQAQSSKPEIGKLADRISAVFVPTVVVIAIVAGLIWYFFGPQPQLVYTLVVATTVLIIACPCALGLATPMSIISGVGRAAEFGVLVRDADALQQASNLDTLVFDKTGTLTEGHPQVVAIHTFNGVSEQQALGWAAALETGSNHPLARAILQRAEGLTLATASQFRTLRGLGVSGEVDGIPLLLGNNRLLEEQQIDTRELQSLIQQQAESGATPVILTANGKPAALLSIRDPLREDSIGALQRLHQLGYSLVMLTGDNPITANAIAKEAGIDRVIAGVLPDGKADAIKQLQAAGHKVAMIGDGINDAPALAQADVGIAMGGGSDIAIETAAITLMRHSLYGVVDAVELSKATLRNMKQNLLGAFFYNALGIPIAAGILYPFTGTLLSPVVAGAAMALSSITVVSNANRLLRFKPKQ.

2 consecutive HMA domains span residues 3 to 64 (QTTL…YQAT) and 69 to 130 (PDVE…YHAT). 4 residues coordinate Cu(+): C14, C17, C80, and C83. Disordered stretches follow at residues 131–153 (QQGIDSPKTEPLTHSAQSQPESL) and 178–201 (VLPTNTALPTNTTSTTSTADTASA). A compositionally biased stretch (polar residues) spans 142–151 (LTHSAQSQPE). The HMA 3 domain maps to 226–289 (ESVQLLLTGM…AVKNAGYGAE (64 aa)). Cu(+)-binding residues include C237 and C240. 5 consecutive transmembrane segments (helical) span residues 316–336 (AALGLLLGIPLMAWGLFGGSM), 345–365 (PWLIIGIITLLVMIFAGGHFY), 381–401 (TLVALGTGAAWIYSITVNIWP), 565–585 (AVFVPTVVVIAIVAGLIWYFF), and 592–612 (VYTLVVATTVLIIACPCALGL). D650 serves as the catalytic 4-aspartylphosphate intermediate. Mg(2+) contacts are provided by D847 and D851. The next 3 helical transmembrane spans lie at 860-880 (VGIAMGGGSDIAIETAAITLM), 906-926 (LGAFFYNALGIPIAAGILYPF), and 928-948 (GTLLSPVVAGAAMALSSITVV).

It belongs to the cation transport ATPase (P-type) (TC 3.A.3) family. Type IB subfamily.

Its subcellular location is the cell membrane. It catalyses the reaction Cu(+)(in) + ATP + H2O = Cu(+)(out) + ADP + phosphate + H(+). Involved in copper export. This chain is Copper-exporting P-type ATPase (copA), found in Yersinia pestis.